Reading from the N-terminus, the 411-residue chain is Lissencephaly-1 homolog (411 aa).

Residues 9–41 (QREELNQAIADYLGTNGYADSLEAFRKEADLST) form the LisH domain. Residues 56 to 83 (TSVIRLQKKVMELEAKLTEAEKEVIEGA) adopt a coiled-coil conformation. WD repeat units follow at residues 106–147 (GHRA…RTLK), 148–187 (GHTD…ECVK), 191–230 (GHDH…CVKT), 233–272 (GHRE…CKVE), 275–334 (DHEH…CLLT), 337–376 (GHDN…CMKT), and 379–411 (AHQH…WECR).

Belongs to the WD repeat LIS1/nudF family.

Its subcellular location is the cytoplasm. The protein resides in the cytoskeleton. The protein localises to the microtubule organizing center. It localises to the centrosome. Positively regulates the activity of the minus-end directed microtubule motor protein dynein. May enhance dynein-mediated microtubule sliding by targeting dynein to the microtubule plus end. Required for several dynein- and microtubule-dependent processes. The protein is Lissencephaly-1 homolog of Drosophila grimshawi (Hawaiian fruit fly).